The primary structure comprises 455 residues: ATP-dependent protease ATPase subunit HslU (455 aa).

Residues Ile19 and Gly61 to Glu66 each bind ATP. The disordered stretch occupies residues Glu144 to Lys163. 3 residues coordinate ATP: Asp268, Glu333, and Arg405.

This sequence belongs to the ClpX chaperone family. HslU subfamily. As to quaternary structure, a double ring-shaped homohexamer of HslV is capped on each side by a ring-shaped HslU homohexamer. The assembly of the HslU/HslV complex is dependent on binding of ATP.

It is found in the cytoplasm. Its function is as follows. ATPase subunit of a proteasome-like degradation complex; this subunit has chaperone activity. The binding of ATP and its subsequent hydrolysis by HslU are essential for unfolding of protein substrates subsequently hydrolyzed by HslV. HslU recognizes the N-terminal part of its protein substrates and unfolds these before they are guided to HslV for hydrolysis. This is ATP-dependent protease ATPase subunit HslU from Francisella tularensis subsp. holarctica (strain FTNF002-00 / FTA).